The chain runs to 102 residues: Large ribosomal subunit protein bL21 (102 aa).

This sequence belongs to the bacterial ribosomal protein bL21 family. As to quaternary structure, part of the 50S ribosomal subunit. Contacts protein L20.

Functionally, this protein binds to 23S rRNA in the presence of protein L20. The protein is Large ribosomal subunit protein bL21 of Campylobacter jejuni subsp. doylei (strain ATCC BAA-1458 / RM4099 / 269.97).